The primary structure comprises 208 residues: Ras-related protein Rab-6A (208 aa).

At Ser-2 the chain carries N-acetylserine. 10 residues coordinate GTP: Ser-23, Val-24, Gly-25, Lys-26, Thr-27, Ser-28, Asp-39, Asn-40, Tyr-42, and Thr-45. Thr-27 serves as a coordination point for Mg(2+). Positions Arg-32–Phe-50 match the Switch 1 motif. Residues Thr-45 and Asp-68 each contribute to the Mg(2+) site. A Switch 2 motif is present at residues Thr-69–Val-88. The GTP site is built by Gly-71, Asn-126, Lys-127, Asp-129, Ser-156, Ala-157, and Lys-158. Ser-184 is modified (phosphoserine). 2 S-geranylgeranyl cysteine lipidation sites follow: Cys-206 and Cys-208. At Cys-208 the chain carries Cysteine methyl ester.

This sequence belongs to the small GTPase superfamily. Rab family. As to quaternary structure, interacts with BICDL1; leads to its accumulation in the pericentrosomal region. Interacts with SCYL1BP1. Interacts with VSP52. Interacts with RABGAP1. Interacts with GCC2 (via its GRIP domain). Interacts with RAB6IP1 (via its RUN 1 domain). Interacts with TMF1. Interacts with CIMAP3. Interacts (GTP-bound) with APBA1/MINT1 isoform 3, also called Mint1_826, but not with isoform 1. Interacts with RIC1; the interaction is direct with a preference for RAB6A-GDP. Interacts with RGP1; the interaction is direct with a preference for RAB6A-GDP. Interacts (GTP-bound) with DYNLRB1; the interaction is direct. Interacts with BICD1. Interacts with BICD2; the interaction is direct. Interacts (GTP-bound) with VPS13B. In terms of assembly, interacts with BICD1. Interacts (GDP-bound) with DYNLRB1; the interaction is direct. Interacts (GTP-bound) with VPS13B. Mg(2+) is required as a cofactor. In terms of processing, prenylated.

The protein resides in the golgi apparatus membrane. It localises to the cytoplasmic vesicle. It is found in the secretory vesicle. Its subcellular location is the acrosome membrane. The catalysed reaction is GTP + H2O = GDP + phosphate + H(+). Its activity is regulated as follows. Regulated by guanine nucleotide exchange factors (GEFs) which promote the exchange of bound GDP for free GTP. Regulated by GTPase activating proteins (GAPs) which increase the GTP hydrolysis activity. Inhibited by GDP dissociation inhibitors (GDIs). The small GTPases Rab are key regulators of intracellular membrane trafficking, from the formation of transport vesicles to their fusion with membranes. Rabs cycle between an inactive GDP-bound form and an active GTP-bound form that is able to recruit to membranes different sets of downstream effectors directly responsible for vesicle formation, movement, tethering and fusion. RAB6A acts as a regulator of COPI-independent retrograde transport from the Golgi apparatus towards the endoplasmic reticulum (ER). Has a low GTPase activity. Recruits VPS13B to the Golgi membrane. Plays a role in neuron projection development. This Mus musculus (Mouse) protein is Ras-related protein Rab-6A.